A 451-amino-acid polypeptide reads, in one-letter code: REST corepressor 3 (451 aa).

Positions 1–55 are disordered; that stretch reads MPGMMEKGPELLGKSRSANGGAKSPAGGGGSSANGGLHFSEPESGCSSDDEHGDV. Residues 55 to 139 enclose the ELM2 domain; sequence VGMRVGAEYQ…KSLADLPNFT (85 aa). Lys-76 is covalently cross-linked (Glycyl lysine isopeptide (Lys-Gly) (interchain with G-Cter in SUMO2)). Residues 140–191 form the SANT domain; sequence PFPDEWTVEDKVLFEQAFSFHGKSFHRIQQMLPDKTIASLVKYYYSWKKTRS. A disordered region spans residues 204–275; that stretch reads ANRHNQGDSD…SQRSKCRPPK (72 aa). Residues Ser-212 and Ser-227 each carry the phosphoserine modification. Residues 218 to 240 are compositionally biased toward basic and acidic residues; the sequence is EAHPMDGNDSDYDPKKEAKREGN. Lys-249 is covalently cross-linked (Glycyl lysine isopeptide (Lys-Gly) (interchain with G-Cter in SUMO2)). The segment covering 261 to 273 has biased composition (basic residues); sequence QHRHHSQRSKCRP. The stretch at 293–329 forms a coiled coil; that stretch reads AANTILRQLDMELISLKRQVQNAKQVNSALKQKMEGG. Residues 333–451 are disordered; that stretch reads FKPPEAQTPQ…IQTDSQPSLH (119 aa). A compositionally biased stretch (pro residues) spans 349 to 361; it reads PSPPAPSSTPTPT. Residues 375–384 are compositionally biased toward low complexity; it reads RPTLPAAPAL. An asymmetric dimethylarginine mark is found at Arg-401 and Arg-413. Residues 431–451 are compositionally biased toward polar residues; that stretch reads VGGQQPPSLIGIQTDSQPSLH.

It belongs to the CoREST family.

It is found in the nucleus. May act as a component of a corepressor complex that represses transcription. The polypeptide is REST corepressor 3 (Rcor3) (Mus musculus (Mouse)).